We begin with the raw amino-acid sequence, 481 residues long: PRAME family member 22 (481 aa).

Residues 99-126 form an LRR 1; degenerate repeat; sequence RWKLQVLELRDVDENFWTIWSGARPLSC. Residues 181-205 form an LRR 2; degenerate repeat; the sequence is HLCCTKVVNYSMSILNFRNILETVY. The LRR 3; degenerate repeat unit spans residues 206–232; that stretch reads PDSIQVLEIWNMCWPCMIVEFSRYLSQ. The LRR 4; degenerate repeat unit spans residues 233 to 267; sequence MRNLRKLFISDGCRYLLSSDSQEQLVAEFSSVLLR. LRR repeat units follow at residues 268–293, 294–325, 326–344, 350–377, and 378–402; these read LEYL…IRCL, RSPL…SQLK, QLNL…PLRA, AATL…ALSC, and CSNL…LLRH.

The protein belongs to the PRAME family.

This chain is PRAME family member 22, found in Homo sapiens (Human).